Here is a 151-residue protein sequence, read N- to C-terminus: Transcriptional regulator MraZ (151 aa).

2 SpoVT-AbrB domains span residues 5–52 and 81–124; these read ANAV…PLDE and AVDL…DEDA.

This sequence belongs to the MraZ family. Forms oligomers.

It is found in the cytoplasm. The protein localises to the nucleoid. The sequence is that of Transcriptional regulator MraZ from Pseudomonas putida (strain ATCC 700007 / DSM 6899 / JCM 31910 / BCRC 17059 / LMG 24140 / F1).